The sequence spans 593 residues: MSTEAEPRVLREVVLSQLATGESRAYKMWLPPLTDPTPVNELVERDYQRRPLRFGLGIMDEPRRHRQEVWGVDVSAAGGNIAVGGAPQTGKSTFLQTLVVSAAATHTPRQVQFYCVDLGGGGLMYLEDLPHVGGVATRAEPDRVNRVVAEVKAVLRAREQVFKQYRVGSIASYREMRDDPNNPASQDPFGDVFLVIDGWPAFVAEFPDLEPAVQDIAGQGLAYGVHVIITTPRWTELKSRVRDYLGTKIEFRLGDVNETQIDRITREIPANRPGRAVSLEKHHLMMGVPRLDGVHSADNIVEAISSAVQQIADRHTDQAPQVRVLPERIYLHQLDPNPPGPDSDYRTRWQVPLGVRESDLTVAYNQMHLTPHLLIFGAPKSGKTRIAHAVAQAICKRNSPQQVRFMLADYRSGLLDAVPQSHLLDAGAINRNSATLEEAIKALAVNLKKRLPPPDLTTAQLRARSWWSGPDVVLLVDDWHMVTAAAGMVSPMAPLGPLLPAAADIGLHVIVTCQMSMAHRATMDKFVGAAYGAGSPTLFLSGEKNDFPSRDIIVKKRPPGQAFLVGPDGKEVIQAAYVDPPEEEVFSPPSEGS.

2 consecutive FtsK domains span residues 66–260 and 350–546; these read RQEV…NETQ and QVPL…EKND. ATP contacts are provided by residues 85-92 and 377-384; these read GAPQTGKS and GAPKSGKT.

In terms of assembly, part of the ESX-1 / type VII secretion system (T7SS), which is composed of cytosolic and membrane components. The ESX-1 membrane complex is composed of EccB1, EccCa1, EccCb1, EccD1 and EccE1.

The protein localises to the cytoplasm. Part of the ESX-1 / type VII specialized secretion system (T7SS), which exports several proteins including EsxA and EsxB. Plays a role in DNA conjugation, in both donor and recipient strains. This is ESX-1 secretion system protein EccCb1 from Mycolicibacterium smegmatis (strain ATCC 700084 / mc(2)155) (Mycobacterium smegmatis).